We begin with the raw amino-acid sequence, 382 residues long: Lysophosphatidylserine lipase ABHD12 (382 aa).

The segment covering 1 to 12 has biased composition (basic and acidic residues); it reads MRKRKGSADHDS. Residues 1–45 form a disordered region; the sequence is MRKRKGSADHDSSFTATLTDGSSDLKQCHKGTDADTDPGGSGKEM. Residues 1–60 are Cytoplasmic-facing; sequence MRKRKGSADHDSSFTATLTDGSSDLKQCHKGTDADTDPGGSGKEMGRRCRRGGLMWRLRR. A compositionally biased stretch (polar residues) spans 13-25; sequence SFTATLTDGSSDL. Residues 61–81 traverse the membrane as a helical segment; it reads ILIWLLGIYIAIPVIIKVCPS. Residues 82–382 are Extracellular-facing; sequence IQAKLVFLNF…DFLRAPHPHG (301 aa). Asn-109 carries an N-linked (GlcNAc...) asparagine glycan. Ser-232 acts as the Nucleophile in catalysis. Active-site charge relay system residues include Asp-319 and His-358.

This sequence belongs to the serine esterase family. Ubiquitously expressed in adult tissues.

The protein resides in the endoplasmic reticulum membrane. The catalysed reaction is 1-(9Z-octadecenoyl)-sn-glycero-3-phospho-L-serine + H2O = sn-glycero-3-phospho-L-serine + (9Z)-octadecenoate + H(+). The enzyme catalyses 1-(9Z-octadecenoyl)-sn-glycero-3-phospho-(1'-sn-glycerol) + H2O = sn-glycero-3-phospho-(1'-sn-glycerol) + (9Z)-octadecenoate + H(+). It carries out the reaction 1-(9Z-octadecenoyl)-sn-glycero-3-phospho-(1D-myo-inositol) + H2O = sn-glycero-3-phospho-1D-myo-inositol + (9Z)-octadecenoate + H(+). It catalyses the reaction 1-(9Z-octadecenoyl)-sn-glycero-3-phosphoethanolamine + H2O = sn-glycero-3-phosphoethanolamine + (9Z)-octadecenoate + H(+). The catalysed reaction is 1-(9Z-octadecenoyl)-sn-glycero-3-phosphocholine + H2O = 1-(9Z-octadecenoyl)-sn-glycerol + phosphocholine + H(+). The enzyme catalyses 2-(9Z-octadecenoyl)-glycerol + H2O = glycerol + (9Z)-octadecenoate + H(+). It carries out the reaction 1-hexadecanoyl-sn-glycero-3-phospho-L-serine + H2O = sn-glycero-3-phospho-L-serine + hexadecanoate + H(+). It catalyses the reaction 2-(5Z,8Z,11Z,14Z-eicosatetraenoyl)-glycerol + H2O = glycerol + (5Z,8Z,11Z,14Z)-eicosatetraenoate + H(+). The catalysed reaction is Hydrolyzes glycerol monoesters of long-chain fatty acids.. The enzyme catalyses 1-decanoylglycerol + H2O = decanoate + glycerol + H(+). It carries out the reaction 1-dodecanoylglycerol + H2O = dodecanoate + glycerol + H(+). It catalyses the reaction 1-tetradecanoylglycerol + H2O = tetradecanoate + glycerol + H(+). The catalysed reaction is 2-hexadecanoylglycerol + H2O = glycerol + hexadecanoate + H(+). The enzyme catalyses 1-(9Z-octadecenoyl)-glycerol + H2O = glycerol + (9Z)-octadecenoate + H(+). It carries out the reaction 2-(9Z,12Z-octadecadienoyl)-glycerol + H2O = (9Z,12Z)-octadecadienoate + glycerol + H(+). It catalyses the reaction 1-(5Z,8Z,11Z,14Z-eicosatetraenoyl)-glycerol + H2O = glycerol + (5Z,8Z,11Z,14Z)-eicosatetraenoate + H(+). The catalysed reaction is 1-(9Z,12Z-octadecadienoyl)-glycerol + H2O = (9Z,12Z)-octadecadienoate + glycerol + H(+). The enzyme catalyses 1-hexadecanoylglycerol + H2O = glycerol + hexadecanoate + H(+). It carries out the reaction 1-octadecanoylglycerol + H2O = octadecanoate + glycerol + H(+). It catalyses the reaction 1-octadecanoyl-2-(9,10-epoxyoctadecanoyl)-sn-glycero-3-phospho-L-serine + H2O = 9,10-epoxyoctadecanoate + 1-octadecanoyl-sn-glycero-3-phosphoserine + H(+). The catalysed reaction is 1-octadecanoyl-2-(10-hydroxyoctadecanoyl)-sn-glycero-3-phospho-L-serine + H2O = 1-octadecanoyl-sn-glycero-3-phosphoserine + 10-hydroxyoctadecanoate + H(+). The enzyme catalyses 1-hexadecanoyl-2-(10-hydroxyoctadecanoyl)-sn-glycero-3-phospho-L-serine + H2O = 10-hydroxyoctadecanoate + 1-hexadecanoyl-sn-glycero-3-phospho-L-serine + H(+). In terms of biological role, lysophosphatidylserine (LPS) lipase that mediates the hydrolysis of lysophosphatidylserine, a class of signaling lipids that regulates immunological and neurological processes. Represents a major lysophosphatidylserine lipase in the brain, thereby playing a key role in the central nervous system. Also able to hydrolyze oxidized phosphatidylserine; oxidized phosphatidylserine is produced in response to severe inflammatory stress and constitutes a proapoptotic 'eat me' signal. Also has monoacylglycerol (MAG) lipase activity: hydrolyzes 2-arachidonoylglycerol (2-AG), thereby acting as a regulator of endocannabinoid signaling pathways. Has a strong preference for very-long-chain lipid substrates; substrate specificity is likely due to improved catalysis and not improved substrate binding. This Danio rerio (Zebrafish) protein is Lysophosphatidylserine lipase ABHD12.